A 163-amino-acid polypeptide reads, in one-letter code: Nucleotide-binding protein Spro_1084 (163 aa).

The protein belongs to the YajQ family.

Its function is as follows. Nucleotide-binding protein. This Serratia proteamaculans (strain 568) protein is Nucleotide-binding protein Spro_1084.